The sequence spans 726 residues: Catalase-peroxidase (726 aa).

Positions 1–33 (MSTTDDTHNTLSTGKCPFHQGGHDRSAGAGTAS) are disordered. Positions 105 to 226 (WHGAGTYRSI…LGATEMGLIY (122 aa)) form a cross-link, tryptophyl-tyrosyl-methioninium (Trp-Tyr) (with M-252). The active-site Proton acceptor is the H106. The tryptophyl-tyrosyl-methioninium (Tyr-Met) (with W-105) cross-link spans 226–252 (YVNPEGPDHSGEPLSAAAAIRATFGNM). H267 is a heme b binding site.

Belongs to the peroxidase family. Peroxidase/catalase subfamily. As to quaternary structure, homodimer or homotetramer. Requires heme b as cofactor. Formation of the three residue Trp-Tyr-Met cross-link is important for the catalase, but not the peroxidase activity of the enzyme.

It catalyses the reaction H2O2 + AH2 = A + 2 H2O. The enzyme catalyses 2 H2O2 = O2 + 2 H2O. In terms of biological role, bifunctional enzyme with both catalase and broad-spectrum peroxidase activity. This chain is Catalase-peroxidase, found in Salmonella schwarzengrund (strain CVM19633).